The following is a 116-amino-acid chain: Phycoerythrin alpha-3 subunit (116 aa).

The (2R,3E)-phycoerythrobilin site is built by S53, E63, R64, C67, and K85.

The protein belongs to the phycoerythrin family. Heterotetramer of 2 different alpha chains and 2 identical beta chains which form 2 alpha-beta heterodimers within the heterotetramer. The two alpha-beta heterodimers are rotated to an open configuration in contrast to the closed configuration found in other cryptophyte species due to the insertion of a single amino acid, Asp-65, in a conserved region of the alpha chain. In the open form, the central chromophores are not in physical contact but are separated by a water-filled channel. Post-translationally, contains three phycoerythrobilin chromophores with binding mediated by both the alpha and beta subunits.

The protein localises to the plastid. It is found in the chloroplast thylakoid membrane. Its function is as follows. Light-harvesting photosynthetic tetrapyrrole chromophore-protein from the phycobiliprotein complex. The chain is Phycoerythrin alpha-3 subunit from Hemiselmis andersenii (Cryptophyte alga).